The following is a 451-amino-acid chain: UDP-glucosyltransferase 74AE2 (451 aa).

Histidine 17 acts as the Proton acceptor in catalysis. Residue histidine 17 coordinates an anthocyanidin. The active-site Charge relay is aspartate 108. Threonine 130, glutamine 330, histidine 345, tryptophan 348, asparagine 349, serine 350, glutamate 353, aspartate 369, and glutamine 370 together coordinate UDP-alpha-D-glucose.

This sequence belongs to the UDP-glycosyltransferase family. In terms of tissue distribution, expressed at higher levels in roots than in leaves.

It carries out the reaction (20S)-ginsenoside C-K + UDP-alpha-D-glucose = (20S)-ginsenoside F2 + UDP + H(+). The enzyme catalyses (20S)-protopanaxadiol + UDP-alpha-D-glucose = (20S)-ginsenoside Rh2 + UDP + H(+). It functions in the pathway secondary metabolite biosynthesis; terpenoid biosynthesis. Component of the dammarane-type triterpene saponins (e.g. PPD-type ginsenosides or panaxosides) biosynthetic pathway. Glycosyltransferase that catalyzes the biosynthesis of ginsenoside Rh2 from protopanaxadiol (PPD) and the conversion of compound K to ginsenoside F2. The sequence is that of UDP-glucosyltransferase 74AE2 from Panax ginseng (Korean ginseng).